Here is a 295-residue protein sequence, read N- to C-terminus: G1/S-specific cyclin-D1 (295 aa).

Residues 28-152 enclose the Cyclin N-terminal domain; sequence LRAMLKAEET…LLVNKLKWNL (125 aa). The tract at residues 264 to 295 is disordered; sequence QQSLDPKAAEEEEEEEEADLACTPTDVRDVNI. Residue Lys-270 forms a Glycyl lysine isopeptide (Lys-Gly) (interchain with G-Cter in ubiquitin) linkage. A compositionally biased stretch (acidic residues) spans 273–282; it reads EEEEEEEEAD. Phosphothreonine is present on Thr-286.

Belongs to the cyclin family. Cyclin D subfamily. Interacts with either CDK4 or CDK6 protein kinase to form a serine/threonine kinase holoenzyme complex. The cyclin subunit imparts substrate specificity to the complex. Component of the ternary complex CCND1/CDK4/CDKN1B required for nuclear translocation and modulation of CDK4-mediated kinase activity. Interacts directly with CDKN1B. Can form similar complexes with either CDKN1A or CDKN2A. Interacts with UHRF2; the interaction ubiquitinates CCND1 and appears to occur independently of phosphorylation. Interacts with USP2. Interacts (via cyclin N-terminal domain) with INSM1 (via N-terminal region); the interaction competes with the binding of CCND1 to CDK4 during cell cycle progression and inhibits CDK4 activity. Interacts with CDK4; the interaction is prevented with the binding of CCND1 to INSM1 during cell cycle progression. In terms of processing, phosphorylation at Thr-286 by MAP kinases is required for ubiquitination and degradation by the DCX(AMBRA1) complex. It also plays an essential role for recognition by the FBXO31 component of SCF (SKP1-cullin-F-box) protein ligase complex following DNA damage. Post-translationally, ubiquitinated at Lys-270 by the DCX(AMBRA1) complex during the transition from G1 to S cell phase, leading to its degradation: ubiquitination is dependent on Thr-286 phosphorylation. The DCX(AMBRA1) complex represents the major regulator of CCND1 stability during the G1/S transition. Also ubiquitinated by the SCF(FBXO4) and Cul7-RING(FBXW8) ubiquitin-protein ligase complexes. Following DNA damage it is ubiquitinated by the SCF(FBXO31) protein ligase complex. SCF(FBXO31) ubiquitination is dependent on Thr-286 phosphorylation. Ubiquitinated also by UHRF2 apparently in a phosphorylation-independent manner. Ubiquitination leads to its degradation and G1 arrest. Deubiquitinated by USP2; leading to its stabilization.

It localises to the nucleus. The protein resides in the cytoplasm. Its subcellular location is the nucleus membrane. Regulatory component of the cyclin D1-CDK4 (DC) complex that phosphorylates and inhibits members of the retinoblastoma (RB) protein family including RB1 and regulates the cell-cycle during G(1)/S transition. Phosphorylation of RB1 allows dissociation of the transcription factor E2F from the RB/E2F complex and the subsequent transcription of E2F target genes which are responsible for the progression through the G(1) phase. Hypophosphorylates RB1 in early G(1) phase. Cyclin D-CDK4 complexes are major integrators of various mitogenenic and antimitogenic signals. Also a substrate for SMAD3, phosphorylating SMAD3 in a cell-cycle-dependent manner and repressing its transcriptional activity. Component of the ternary complex, cyclin D1/CDK4/CDKN1B, required for nuclear translocation and activity of the cyclin D-CDK4 complex. Exhibits transcriptional corepressor activity with INSM1 on the NEUROD1 and INS promoters in a cell cycle-independent manner. The sequence is that of G1/S-specific cyclin-D1 (CCND1) from Canis lupus familiaris (Dog).